The following is a 117-amino-acid chain: Large ribosomal subunit protein uL18 (117 aa).

The protein belongs to the universal ribosomal protein uL18 family. As to quaternary structure, part of the 50S ribosomal subunit; part of the 5S rRNA/L5/L18/L25 subcomplex. Contacts the 5S and 23S rRNAs.

In terms of biological role, this is one of the proteins that bind and probably mediate the attachment of the 5S RNA into the large ribosomal subunit, where it forms part of the central protuberance. The polypeptide is Large ribosomal subunit protein uL18 (Histophilus somni (strain 129Pt) (Haemophilus somnus)).